The following is a 194-amino-acid chain: Putative NAD(P)H nitroreductase YfhC (194 aa).

Residues 20–22, 147–148, and Arg-188 each bind FMN; these read RRS and KI.

The protein belongs to the nitroreductase family. FMN is required as a cofactor.

In Bacillus subtilis (strain 168), this protein is Putative NAD(P)H nitroreductase YfhC (yfhC).